We begin with the raw amino-acid sequence, 455 residues long: GTPase Der (455 aa).

EngA-type G domains lie at 4-169 and 178-353; these read PVVA…PPKD and IQMA…EQHR. GTP is bound by residues 10–17, 57–61, 120–123, 184–191, 231–235, and 296–299; these read GRPNVGKS, DTGGL, NKCE, DTAGI, and NKWD. Residues 354–439 form the KH-like domain; it reads RRVSTSVVNE…PLRLFWRGKQ (86 aa).

It belongs to the TRAFAC class TrmE-Era-EngA-EngB-Septin-like GTPase superfamily. EngA (Der) GTPase family. Associates with the 50S ribosomal subunit.

In terms of biological role, GTPase that plays an essential role in the late steps of ribosome biogenesis. This is GTPase Der from Synechococcus sp. (strain CC9605).